Here is a 283-residue protein sequence, read N- to C-terminus: Methylamine utilization ferredoxin-type protein MauN (283 aa).

4Fe-4S ferredoxin-type domains lie at 208 to 239 (LRVTAEQSGSCAGCGSCIRVCPEPHVLAPVVS) and 241 to 270 (KANTVTHGDCTRCGACLDQCATGALAMKLD). Cys-218, Cys-221, Cys-224, Cys-228, Cys-250, Cys-253, Cys-256, and Cys-260 together coordinate [4Fe-4S] cluster.

The protein operates within one-carbon metabolism; methylamine degradation. Involved in electron transfer. In Methylobacillus flagellatus (strain ATCC 51484 / DSM 6875 / VKM B-1610 / KT), this protein is Methylamine utilization ferredoxin-type protein MauN (mauN).